The primary structure comprises 312 residues: Protoheme IX farnesyltransferase (312 aa).

9 helical membrane passes run 29–49 (VMSL…GHMN), 50–70 (PVLA…SGAL), 90–110 (IPAG…LSAF), 117–137 (LMVN…YAVI), 150–170 (IVIG…AATG), 177–197 (LVLF…LSLF), 223–243 (ALFY…MGFA), 246–266 (FYGV…WRLW), and 292–312 (IFAV…FGVF).

It belongs to the UbiA prenyltransferase family. Protoheme IX farnesyltransferase subfamily.

The protein localises to the cell inner membrane. The enzyme catalyses heme b + (2E,6E)-farnesyl diphosphate + H2O = Fe(II)-heme o + diphosphate. It functions in the pathway porphyrin-containing compound metabolism; heme O biosynthesis; heme O from protoheme: step 1/1. Functionally, converts heme B (protoheme IX) to heme O by substitution of the vinyl group on carbon 2 of heme B porphyrin ring with a hydroxyethyl farnesyl side group. The polypeptide is Protoheme IX farnesyltransferase (Brucella melitensis biotype 1 (strain ATCC 23456 / CCUG 17765 / NCTC 10094 / 16M)).